The chain runs to 347 residues: Photosystem II protein D1 (347 aa).

3 helical membrane passes run 31-48, 120-135, and 144-158; these read YIGW…LAII, HFIG…EWEF, and WIYL…AATA. A chlorophyll a-binding site is contributed by His120. A pheophytin a-binding site is contributed by Trp128. [CaMn4O5] cluster-binding residues include Asp172 and Glu191. Residues 199–220 traverse the membrane as a helical segment; that stretch reads FHILGVAGVFGGSLFSAMHGSL. Position 200 (His200) interacts with chlorophyll a. A quinone-binding positions include His217 and 266–267; that span reads SF. Residue His217 participates in Fe cation binding. Residue His274 coordinates Fe cation. A helical membrane pass occupies residues 276 to 290; it reads FLAAWPVIGIWFTAL. Positions 334, 335, and 344 each coordinate [CaMn4O5] cluster.

Belongs to the reaction center PufL/M/PsbA/D family. As to quaternary structure, PSII is composed of 1 copy each of membrane proteins PsbA, PsbB, PsbC, PsbD, PsbE, PsbF, PsbH, PsbI, PsbJ, PsbK, PsbL, PsbM, PsbT, PsbX, PsbY, PsbZ, Psb30/Ycf12, at least 3 peripheral proteins of the oxygen-evolving complex and a large number of cofactors. It forms dimeric complexes. The cofactor is The D1/D2 heterodimer binds P680, chlorophylls that are the primary electron donor of PSII, and subsequent electron acceptors. It shares a non-heme iron and each subunit binds pheophytin, quinone, additional chlorophylls, carotenoids and lipids. D1 provides most of the ligands for the Mn4-Ca-O5 cluster of the oxygen-evolving complex (OEC). There is also a Cl(-1) ion associated with D1 and D2, which is required for oxygen evolution. The PSII complex binds additional chlorophylls, carotenoids and specific lipids.. Tyr-163 forms a radical intermediate that is referred to as redox-active TyrZ, YZ or Y-Z.

It localises to the plastid. Its subcellular location is the chloroplast thylakoid membrane. It carries out the reaction 2 a plastoquinone + 4 hnu + 2 H2O = 2 a plastoquinol + O2. Functionally, photosystem II (PSII) is a light-driven water:plastoquinone oxidoreductase that uses light energy to abstract electrons from H(2)O, generating O(2) and a proton gradient subsequently used for ATP formation. It consists of a core antenna complex that captures photons, and an electron transfer chain that converts photonic excitation into a charge separation. The D1/D2 (PsbA/PsbD) reaction center heterodimer binds P680, the primary electron donor of PSII as well as several subsequent electron acceptors. The protein is Photosystem II protein D1 of Alexandrium tamarense (Red tide dinoflagellate).